A 132-amino-acid polypeptide reads, in one-letter code: Fluoride-specific ion channel FluC 1 (132 aa).

4 helical membrane-spanning segments follow: residues leucine 9–leucine 29, alanine 35–phenylalanine 55, leucine 72–valine 89, and tryptophan 100–leucine 120. 2 residues coordinate Na(+): glycine 79 and threonine 82.

Belongs to the fluoride channel Fluc/FEX (TC 1.A.43) family.

Its subcellular location is the cell membrane. It carries out the reaction fluoride(in) = fluoride(out). Na(+) is not transported, but it plays an essential structural role and its presence is essential for fluoride channel function. Functionally, fluoride-specific ion channel. Important for reducing fluoride concentration in the cell, thus reducing its toxicity. The sequence is that of Fluoride-specific ion channel FluC 1 from Mycolicibacterium paratuberculosis (strain ATCC BAA-968 / K-10) (Mycobacterium paratuberculosis).